The following is a 507-amino-acid chain: ATP synthase subunit alpha (507 aa).

Residue 169–176 (GDRQIGKT) coordinates ATP.

The protein belongs to the ATPase alpha/beta chains family. As to quaternary structure, F-type ATPases have 2 components, CF(1) - the catalytic core - and CF(0) - the membrane proton channel. CF(1) has five subunits: alpha(3), beta(3), gamma(1), delta(1), epsilon(1). CF(0) has three main subunits: a(1), b(2) and c(9-12). The alpha and beta chains form an alternating ring which encloses part of the gamma chain. CF(1) is attached to CF(0) by a central stalk formed by the gamma and epsilon chains, while a peripheral stalk is formed by the delta and b chains.

Its subcellular location is the cell inner membrane. It catalyses the reaction ATP + H2O + 4 H(+)(in) = ADP + phosphate + 5 H(+)(out). Its function is as follows. Produces ATP from ADP in the presence of a proton gradient across the membrane. The alpha chain is a regulatory subunit. The polypeptide is ATP synthase subunit alpha (Desulfotalea psychrophila (strain LSv54 / DSM 12343)).